A 144-amino-acid polypeptide reads, in one-letter code: Large ribosomal subunit protein uL15 (144 aa).

The disordered stretch occupies residues 1 to 57 (MKLNDLSPAPGSRREKHRPGRGIGSGLGKTGGRGHKGQSSRSGGTIAPGFEGGQQPL). Gly residues predominate over residues 21–31 (RGIGSGLGKTG).

The protein belongs to the universal ribosomal protein uL15 family. Part of the 50S ribosomal subunit.

Its function is as follows. Binds to the 23S rRNA. This Pseudomonas savastanoi pv. phaseolicola (strain 1448A / Race 6) (Pseudomonas syringae pv. phaseolicola (strain 1448A / Race 6)) protein is Large ribosomal subunit protein uL15.